The primary structure comprises 430 residues: Histidine--tRNA ligase (430 aa).

This sequence belongs to the class-II aminoacyl-tRNA synthetase family. As to quaternary structure, homodimer.

The protein localises to the cytoplasm. The catalysed reaction is tRNA(His) + L-histidine + ATP = L-histidyl-tRNA(His) + AMP + diphosphate + H(+). The polypeptide is Histidine--tRNA ligase (Anaplasma marginale (strain Florida)).